The primary structure comprises 391 residues: Glycerol-3-phosphate dehydrogenase [NAD(+)] 1 (391 aa).

NAD(+) contacts are provided by residues 41 to 46 (GSGNWG), Phe129, Lys152, and Ala185. Lys152 provides a ligand contact to substrate. Lys245 (proton acceptor) is an active-site residue. Positions 310 and 339 each coordinate NAD(+). Residue 310-311 (RN) participates in substrate binding.

Belongs to the NAD-dependent glycerol-3-phosphate dehydrogenase family.

Its subcellular location is the cytoplasm. The enzyme catalyses sn-glycerol 3-phosphate + NAD(+) = dihydroxyacetone phosphate + NADH + H(+). This Saccharomyces uvarum (Yeast) protein is Glycerol-3-phosphate dehydrogenase [NAD(+)] 1 (GPD1).